The following is a 44-amino-acid chain: uncharacterized protein (44 aa).

This is an uncharacterized protein from Bacillus subtilis (strain 168).